We begin with the raw amino-acid sequence, 182 residues long: MGDEEKRNRAITARRQHLKSVMLQIAATELEKEESRRESEKQNYLSEHCPPLHIPGSMSEVQELCKQLHAKIDAAEEEKYDMEVKVQKSSKELEDMNQKLFDLRGKFKRPPLRRVRMSADAMLKALLGSKHKVCMDLRANLKQVKKEDTEKERDLRDVGDWRKNIEEKSGMEGRKKMFESES.

The residue at position 2 (glycine 2) is an N-acetylglycine. The interval 2–48 (GDEEKRNRAITARRQHLKSVMLQIAATELEKEESRRESEKQNYLSEH) is involved in binding TNC. The residue at position 12 (threonine 12) is a Phosphothreonine. Over residues 29–41 (ELEKEESRRESEK) the composition is skewed to basic and acidic residues. Positions 29–53 (ELEKEESRRESEKQNYLSEHCPPLH) are disordered. The interval 97-117 (NQKLFDLRGKFKRPPLRRVRM) is involved in binding TNC and actin. Position 118 is a phosphoserine (serine 118).

This sequence belongs to the troponin I family. As to quaternary structure, binds to actin and tropomyosin.

In terms of biological role, troponin I is the inhibitory subunit of troponin, the thin filament regulatory complex which confers calcium-sensitivity to striated muscle actomyosin ATPase activity. In Rattus norvegicus (Rat), this protein is Troponin I, fast skeletal muscle (Tnni2).